Here is a 199-residue protein sequence, read N- to C-terminus: Recombination protein RecR (199 aa).

The C4-type zinc finger occupies 57-72 (CQSCRTYTEESLCPIC). The Toprim domain occupies 81-176 (STICVVETPA…VISRIAHGVP (96 aa)).

This sequence belongs to the RecR family.

In terms of biological role, may play a role in DNA repair. It seems to be involved in an RecBC-independent recombinational process of DNA repair. It may act with RecF and RecO. In Shewanella sp. (strain MR-4), this protein is Recombination protein RecR.